The sequence spans 240 residues: Urease accessory protein UreF (240 aa).

It belongs to the UreF family. As to quaternary structure, ureD, UreF and UreG form a complex that acts as a GTP-hydrolysis-dependent molecular chaperone, activating the urease apoprotein by helping to assemble the nickel containing metallocenter of UreC. The UreE protein probably delivers the nickel.

It localises to the cytoplasm. In terms of biological role, required for maturation of urease via the functional incorporation of the urease nickel metallocenter. This Bradyrhizobium sp. (strain BTAi1 / ATCC BAA-1182) protein is Urease accessory protein UreF.